An 828-amino-acid polypeptide reads, in one-letter code: MIEKLTIKRSRQKVIAYSVIIIWLMIVNIWLLNNYHLNSSTLTRHGNGDNLIDEDDDSSSSSEYSIYNELDTENYLGQQHQEEDVPNSQSTDNSLIKPTSPAKNSFKDDITIKILQKHLQKQQNNPKDIRTKDSHAEIYNQIFENHPQIDTILGNLNFNQRCQLFFQNLFIKDNNWILNVKDKKIKLENKNDFKFNDFKKSHLNEFKRQFKTMKKLLEPNKIIHNKDFDNSIEFQDFIKMKYEQFWNRTMTYEQKIVDSISILRIFNKCYLIEEATSTTTTKNNKQDFIKDQFKLVDGIRRASKKNPSLPKFKPTKQEQMVNFDNENLSPSILEHRVYPWLSFEYPVYERWTGKVQYQPPKMANYVKDGNQKTTKKTKYNNDKYLSSFFLNRLKQKCNGRGLVLSISDLHVDVTVRLIHLLRALNNRYPIQIVYYDNLSKETKEKIVTAAREVMSHVPKSFERVAKYFPDDYLDNDQGGLPKQEIWFINTYNVIHADYKLQFRGFANKFLATLFNSFDEFILLDADTVLTQSPSYFFNLPQYLETGTFFYKDRTTYETRPKSDSIFFEKLGPSVIDSVMFNIPIMTSYTLNRSFFKGLFHYMESGLVVLNRDMHYSSFLTMVQMNFFEPVNSRIHGDKEIFWLAMAINGKQNYYFDENYAAAVGVMTPDIERTKPDKTLHESKELCSPHPGHISHDDNSLVWLNSGFFYCGQNDKVKFVEEFKHKSRLKHLNTLEAFKTFYYSPLRIENAIIPPMDLDIWAANNEDEPAKGWFGDPRYCSGYMWCAYDKIGGKTKSGKNTRLEGKIINFDEQAQDLFNYYGDVWVGME.

The Cytoplasmic segment spans residues 1–13 (MIEKLTIKRSRQK). A helical transmembrane segment spans residues 14-34 (VIAYSVIIIWLMIVNIWLLNN). Over 35–828 (YHLNSSTLTR…YYGDVWVGME (794 aa)) the chain is Lumenal. The N-linked (GlcNAc...) asparagine glycan is linked to N38. The interval 80 to 104 (HQEEDVPNSQSTDNSLIKPTSPAKN) is disordered. The span at 86 to 103 (PNSQSTDNSLIKPTSPAK) shows a compositional bias: polar residues. Residues N247, N437, and N591 are each glycosylated (N-linked (GlcNAc...) asparagine).

Belongs to the MNN1/MNT family.

It is found in the golgi apparatus membrane. Its pathway is protein modification; protein glycosylation. Functionally, responsible for addition of the terminal mannose residues to the outer chain of core N-linked polysaccharides and to O-linked mannotriose. Implicated in late Golgi modifications. The chain is Putative alpha-1,3-mannosyltransferase MNN12 (MNN12) from Candida albicans (strain SC5314 / ATCC MYA-2876) (Yeast).